Reading from the N-terminus, the 732-residue chain is Catalase-peroxidase (732 aa).

Positions 1–20 are disordered; it reads MDKDSKRPVVGSTVRGGMSN. The tryptophyl-tyrosyl-methioninium (Trp-Tyr) (with M-246) cross-link spans 92 to 220; sequence WHSAGTYRMG…LAAVQMGLIY (129 aa). His93 acts as the Proton acceptor in catalysis. The tryptophyl-tyrosyl-methioninium (Tyr-Met) (with W-92) cross-link spans 220–246; it reads YVNPEGPDGNPDPVAAGYDVIETFARM. Residue His261 coordinates heme b.

This sequence belongs to the peroxidase family. Peroxidase/catalase subfamily. Homodimer or homotetramer. Heme b serves as cofactor. Formation of the three residue Trp-Tyr-Met cross-link is important for the catalase, but not the peroxidase activity of the enzyme.

The enzyme catalyses H2O2 + AH2 = A + 2 H2O. It carries out the reaction 2 H2O2 = O2 + 2 H2O. Bifunctional enzyme with both catalase and broad-spectrum peroxidase activity. The sequence is that of Catalase-peroxidase from Desulfosudis oleivorans (strain DSM 6200 / JCM 39069 / Hxd3) (Desulfococcus oleovorans).